A 396-amino-acid polypeptide reads, in one-letter code: Aspartic protease 1 (396 aa).

A signal peptide spans 1 to 15 (MQTFVLLALVAACSA). The Peptidase A1 domain occupies 68–389 (YLGNITLGTP…DIGNGQIGFA (322 aa)). Asn71 carries an N-linked (GlcNAc...) asparagine glycan. Residue Asp86 is part of the active site. Residues Cys99 and Cys104 are joined by a disulfide bond. Residue Asp278 is part of the active site. A disulfide bridge links Cys313 with Cys349.

It belongs to the peptidase A1 family. As to quaternary structure, interacts with B.thuringiensis endotoxin Cry6Aa; the interaction prevents Cry6Aa proteolysis by host gut proteases.

It localises to the cytoplasm. It is found in the lysosome. Its subcellular location is the secreted. Its function is as follows. Aspartic protease, which is part of the necrosis cell death pathway. Promotes B.thuringiensis Cry6Aa stability by preventing its proteolysis by host gut proteases. Required for Cry6Aa-induced necrotic death of intestinal cells. Cry6Aa uptake into the host intestinal cells triggers an increase in intracellular Ca(2+) levels leading to lysosome rupture and to the subsequent release of asp-1 which leads to necrosis. The polypeptide is Aspartic protease 1 (Caenorhabditis elegans).